A 38-amino-acid chain; its full sequence is Large ribosomal subunit protein bL36 (38 aa).

Belongs to the bacterial ribosomal protein bL36 family.

The sequence is that of Large ribosomal subunit protein bL36 from Anaeromyxobacter dehalogenans (strain 2CP-1 / ATCC BAA-258).